The chain runs to 4923 residues: Bridge-like lipid transfer protein family member 1 (4923 aa).

Residues 25–45 (FVWLLVATIMSCGWIIYLTYY) traverse the membrane as a helical segment. Disordered regions lie at residues 160–179 (NRDE…SVHI), 606–631 (HSKS…KPRW), 1203–1277 (SLHV…SARL), 1300–1334 (FSSE…DSST), 1357–1400 (TEEF…SVEG), 1471–1494 (TNKR…SEES), 1630–1660 (SAAK…DLSI), 1878–1948 (RDGV…PDSS), 2191–2235 (SKSH…LQCN), 2262–2281 (PHRA…RTGN), 2355–2375 (NTLD…QEDL), 2550–2655 (RYTA…SEQS), 2885–2910 (IRQP…VSIN), 3564–3596 (YSNS…IKVE), 3645–3695 (FSPT…RKSA), 3739–3797 (LHPS…SLQS), 3848–3884 (GMRD…AKGK), 4017–4071 (PTSA…TGPP), 4102–4124 (AVTG…SSVT), 4249–4309 (DGQT…AAAQ), and 4797–4827 (RMFA…EKEE). A compositionally biased stretch (low complexity) spans 1210–1226 (SHSSASSSEENSSSSAA). Residues 1237 to 1248 (PSPSTELMNVTT) show a composition bias toward polar residues. Positions 1260 to 1271 (SPLRSPLKRQSS) are enriched in low complexity. The segment covering 1641–1658 (TEGTTPGSLSTPHGQTDL) has biased composition (polar residues). The segment covering 1887–1898 (SSGSQTGSGYST) has biased composition (low complexity). Residues 1907-1920 (NDAQSPASEPNNNS) show a composition bias toward polar residues. A compositionally biased stretch (acidic residues) spans 1921 to 1931 (DSDEQDEGVES). Polar residues-rich tracts occupy residues 2208–2218 (PYQSLSYTSGD) and 2267–2281 (EQTA…RTGN). The span at 2550-2560 (RYTAGSSSPTP) shows a compositional bias: polar residues. The segment covering 2606 to 2624 (TRSREPRGRGTLGRSERRT) has biased composition (basic and acidic residues). The span at 3581–3595 (KRSDRPREDLPDIKV) shows a compositional bias: basic and acidic residues. The segment covering 3746-3770 (TEHEDLALRRSCERSSRSLDQDSPP) has biased composition (basic and acidic residues). Polar residues predominate over residues 4017-4039 (PTSATYPSEGQHTPSSTPPSVHN). The span at 4044–4056 (PGGPSTGLGSPLG) shows a compositional bias: low complexity. 3 stretches are compositionally biased toward polar residues: residues 4249–4268 (DGQT…TPSH), 4276–4286 (TGRTRSVSDSS), and 4804–4814 (GQKSPTTQQDE). A compositionally biased stretch (basic and acidic residues) spans 4816–4827 (SSDKKEEREKEE).

Its subcellular location is the cell membrane. It localises to the endoplasmic reticulum membrane. The protein localises to the mitochondrion membrane. Tube-forming lipid transport protein which provides phosphatidylethanolamine for glycosylphosphatidylinositol (GPI) anchor synthesis in the endoplasmic reticulum. Plays a role in endosomal trafficking and endosome recycling. Also involved in the actin cytoskeleton and cilia structural dynamics. Acts as a regulator of phagocytosis. This is Bridge-like lipid transfer protein family member 1 (bltp1) from Danio rerio (Zebrafish).